Here is a 1937-residue protein sequence, read N- to C-terminus: Myosin-8 (1937 aa).

In terms of domain architecture, Myosin N-terminal SH3-like spans 35 to 84 (DAKTSVFVAEPKESYVKSVIQSKDGGKVTVKTESGATLTVKEDQVFPMNP). Thr66 and Thr71 each carry phosphothreonine. Residues 88–781 (DKIEDMAMMT…LLGLLEEMRD (694 aa)) enclose the Myosin motor domain. Lys132 is subject to N6,N6,N6-trimethyllysine. ATP is bound at residue 181–188 (GESGAGKT). The residue at position 389 (Tyr389) is a Phosphotyrosine. A Phosphothreonine modification is found at Thr419. Phosphotyrosine is present on Tyr424. Ser625 carries the phosphoserine modification. Residues 658 to 680 (LNKLMTNLRSTHPHFVRCIIPNE) form an actin-binding region. His756 is subject to Pros-methylhistidine. Residues 760-774 (KFGHTKVFFKAGLLG) are actin-binding. An IQ domain is found at 781–813 (DEKLAQIITRTQAVCRGYLMRVEYQKMLLRRES). Residues 842 to 1937 (LLKSAETEKE…REVHTKISAE (1096 aa)) are a coiled coil. 2 positions are modified to phosphoserine: Ser1091 and Ser1095. A disordered region spans residues 1125-1171 (IEAERASRAKAEKQRSDLSRELEEISERLEEAGGATSAQVEMNKKRE). Basic and acidic residues predominate over residues 1127–1155 (AERASRAKAEKQRSDLSRELEEISERLEE). 2 positions are modified to phosphoserine: Ser1161 and Ser1236. Phosphothreonine is present on Thr1254. Residue Ser1260 is modified to Phosphoserine. A Phosphothreonine modification is found at Thr1285. A phosphoserine mark is found at Ser1291, Ser1302, and Ser1305. The residue at position 1463 (Tyr1463) is a Phosphotyrosine. Residue Thr1466 is modified to Phosphothreonine. A Phosphotyrosine modification is found at Tyr1491. A Phosphoserine modification is found at Ser1494. A Phosphothreonine modification is found at Thr1500. Position 1513 is a phosphoserine (Ser1513). Thr1516 bears the Phosphothreonine mark. A phosphoserine mark is found at Ser1553, Ser1573, Ser1602, Ser1713, and Ser1725. Phosphothreonine is present on Thr1729. A Phosphoserine modification is found at Ser1738.

The protein belongs to the TRAFAC class myosin-kinesin ATPase superfamily. Myosin family. As to quaternary structure, muscle myosin is a hexameric protein that consists of 2 heavy chain subunits (MHC), 2 alkali light chain subunits (MLC) and 2 regulatory light chain subunits (MLC-2).

The protein localises to the cytoplasm. The protein resides in the myofibril. Functionally, muscle contraction. The sequence is that of Myosin-8 (Myh8) from Mus musculus (Mouse).